Consider the following 196-residue polypeptide: Ribose 1,5-bisphosphate phosphokinase PhnN (196 aa).

This sequence belongs to the ribose 1,5-bisphosphokinase family.

It catalyses the reaction alpha-D-ribose 1,5-bisphosphate + ATP = 5-phospho-alpha-D-ribose 1-diphosphate + ADP. It participates in metabolic intermediate biosynthesis; 5-phospho-alpha-D-ribose 1-diphosphate biosynthesis; 5-phospho-alpha-D-ribose 1-diphosphate from D-ribose 5-phosphate (route II): step 3/3. Functionally, catalyzes the phosphorylation of ribose 1,5-bisphosphate to 5-phospho-D-ribosyl alpha-1-diphosphate (PRPP). This is Ribose 1,5-bisphosphate phosphokinase PhnN from Psychromonas ingrahamii (strain DSM 17664 / CCUG 51855 / 37).